A 678-amino-acid polypeptide reads, in one-letter code: Penicillin-binding protein activator LpoA (678 aa).

Residues 1 to 26 form the signal peptide; that stretch reads MVPSTFSRLKAARCLPVVLAALIFAG. A lipid anchor (N-palmitoyl cysteine) is attached at C27. A lipid anchor (S-diacylglycerol cysteine) is attached at C27. Low complexity-rich tracts occupy residues 300-310, 330-340, and 513-528; these read AADVAEQPQPQ, QPAAQPVPVSA, and TTNN…DDQF. 2 disordered regions span residues 300–340 and 496–528; these read AADV…PVSA and ALTG…DDQF.

Belongs to the LpoA family. Interacts with PBP1a.

It is found in the cell outer membrane. Its function is as follows. Regulator of peptidoglycan synthesis that is essential for the function of penicillin-binding protein 1A (PBP1a). The polypeptide is Penicillin-binding protein activator LpoA (Shigella flexneri serotype 5b (strain 8401)).